Reading from the N-terminus, the 197-residue chain is Sodium/potassium-transporting ATPase subunit beta-1-interacting protein 3 (197 aa).

4 consecutive transmembrane segments (helical) span residues 2-22 (GCCT…VSAL), 35-55 (APIL…FGTI), 62-82 (IMVY…IICF), and 152-172 (VQIL…SISM).

The protein belongs to the NKAIN family. In terms of assembly, interacts with ATP1B1.

The protein resides in the cell membrane. This Homo sapiens (Human) protein is Sodium/potassium-transporting ATPase subunit beta-1-interacting protein 3 (NKAIN3).